Here is a 343-residue protein sequence, read N- to C-terminus: tRNA N6-adenosine threonylcarbamoyltransferase (343 aa).

Residues His-120 and His-124 each coordinate Fe cation. Substrate-binding positions include Val-142–Gly-146, Asp-175, Gly-188, Asp-192, and Asn-281. Asp-310 is a binding site for Fe cation.

It belongs to the KAE1 / TsaD family. It depends on Fe(2+) as a cofactor.

It is found in the cytoplasm. The enzyme catalyses L-threonylcarbamoyladenylate + adenosine(37) in tRNA = N(6)-L-threonylcarbamoyladenosine(37) in tRNA + AMP + H(+). Required for the formation of a threonylcarbamoyl group on adenosine at position 37 (t(6)A37) in tRNAs that read codons beginning with adenine. Is involved in the transfer of the threonylcarbamoyl moiety of threonylcarbamoyl-AMP (TC-AMP) to the N6 group of A37, together with TsaE and TsaB. TsaD likely plays a direct catalytic role in this reaction. This is tRNA N6-adenosine threonylcarbamoyltransferase from Bacillus cereus (strain ATCC 10987 / NRS 248).